We begin with the raw amino-acid sequence, 496 residues long: Aspartyl/glutamyl-tRNA(Asn/Gln) amidotransferase subunit B (496 aa).

It belongs to the GatB/GatE family. GatB subfamily. Heterotrimer of A, B and C subunits.

It carries out the reaction L-glutamyl-tRNA(Gln) + L-glutamine + ATP + H2O = L-glutaminyl-tRNA(Gln) + L-glutamate + ADP + phosphate + H(+). The catalysed reaction is L-aspartyl-tRNA(Asn) + L-glutamine + ATP + H2O = L-asparaginyl-tRNA(Asn) + L-glutamate + ADP + phosphate + 2 H(+). Its function is as follows. Allows the formation of correctly charged Asn-tRNA(Asn) or Gln-tRNA(Gln) through the transamidation of misacylated Asp-tRNA(Asn) or Glu-tRNA(Gln) in organisms which lack either or both of asparaginyl-tRNA or glutaminyl-tRNA synthetases. The reaction takes place in the presence of glutamine and ATP through an activated phospho-Asp-tRNA(Asn) or phospho-Glu-tRNA(Gln). This is Aspartyl/glutamyl-tRNA(Asn/Gln) amidotransferase subunit B from Natronomonas pharaonis (strain ATCC 35678 / DSM 2160 / CIP 103997 / JCM 8858 / NBRC 14720 / NCIMB 2260 / Gabara) (Halobacterium pharaonis).